The chain runs to 134 residues: MGKDTIADIITSIRNADMNRKRTVQIPFTNITENTVKILLREGFIENVRKHRESDKSFLVLTLRYRRNTKGSYKTFLNLKRISTPGLRIYYNYQKIPRILGGMGIVILSTSRGIMTDREARLEKIGGEVLCYIW.

The protein belongs to the universal ribosomal protein uS8 family. As to quaternary structure, part of the 30S ribosomal subunit.

It is found in the plastid. Its subcellular location is the chloroplast. Its function is as follows. One of the primary rRNA binding proteins, it binds directly to 16S rRNA central domain where it helps coordinate assembly of the platform of the 30S subunit. The sequence is that of Small ribosomal subunit protein uS8c (rps8) from Lotus japonicus (Lotus corniculatus var. japonicus).